The chain runs to 93 residues: Mitochondrial import inner membrane translocase subunit TIM9 (93 aa).

The short motif at 43–67 is the Twin CX3C motif element; it reads CFVDCVDSFTRKSLQKQEETCVMRC. Disulfide bonds link Cys43–Cys67 and Cys47–Cys63.

Belongs to the small Tim family. Heterohexamer; composed of 3 copies of TIM9 and 3 copies of TIM10, named soluble 70 kDa complex. The complex associates with the TIM22 component of the TIM22 complex. Interacts with multi-pass transmembrane proteins in transit. In terms of tissue distribution, expressed in roots, flowers, young cotyledons and leaves.

The protein resides in the mitochondrion intermembrane space. In terms of biological role, mitochondrial intermembrane chaperone that participates in the import and insertion of multi-pass transmembrane proteins into the mitochondrial inner membrane. May also be required for the transfer of beta-barrel precursors from the TOM complex to the sorting and assembly machinery (SAM complex) of the outer membrane. Acts as a chaperone-like protein that protects the hydrophobic precursors from aggregation and guide them through the mitochondrial intermembrane space. In Arabidopsis thaliana (Mouse-ear cress), this protein is Mitochondrial import inner membrane translocase subunit TIM9 (TIM9).